A 637-amino-acid chain; its full sequence is Transcription factor PHYTOCHROME INTERACTING FACTOR-LIKE 15 (637 aa).

The segment covering 35-46 (FFGGTGGGGGGS) has biased composition (gly residues). 3 disordered regions span residues 35–54 (FFGGTGGGGGGSSSRAQERQ), 146–213 (ASLP…EGVM), and 356–397 (ECSA…RRRR). Positions 149–170 (PASNHNGATNNRNAPVATTTTR) are enriched in polar residues. The segment at 384–397 (RTAEVHNLSERRRR) is basic motif. The span at 384–397 (RTAEVHNLSERRRR) shows a compositional bias: basic and acidic residues. The bHLH domain occupies 384 to 433 (RTAEVHNLSERRRRDRINEKMRALQELIPNCNKIDKASMLDEAIEYLKTL). The interval 398–433 (DRINEKMRALQELIPNCNKIDKASMLDEAIEYLKTL) is helix-loop-helix motif. Residues 601 to 637 (GDNENFRIPSSAQTKSSQFSDGTGKGTNARERDGAET) form a disordered region. Polar residues predominate over residues 608-621 (IPSSAQTKSSQFSD). The span at 628–637 (NARERDGAET) shows a compositional bias: basic and acidic residues.

It belongs to the bHLH protein family. Interacts with LF and PRR1.

Its subcellular location is the nucleus. Its function is as follows. Transcription factor that may act as negative regulator of phyB-dependent light signal transduction. This is Transcription factor PHYTOCHROME INTERACTING FACTOR-LIKE 15 from Oryza sativa subsp. japonica (Rice).